A 1039-amino-acid polypeptide reads, in one-letter code: Probable calcium-transporting ATPase 9, plasma membrane-type (1039 aa).

Residues 1–175 lie on the Cytoplasmic side of the membrane; it reads MEKLDRYLQE…FVWDALQDMT (175 aa). 2 consecutive transmembrane segments (helical) span residues 176-196 and 199-219; these read LIIL…TEGW and GMYD…VTAV. The Cytoplasmic portion of the chain corresponds to 220–250; it reads SDYKQSLQFKELDNEKKKIFIHVTRDGRRQK. The next 2 membrane-spanning stretches (helical) occupy residues 251-271 and 353-373; these read ISIY…DQVP and VATI…LVLL. Residues 374-406 are Cytoplasmic-facing; the sequence is VRFLIDKGMTVGLLKWYSTDALTIVNYFATAVT. Residues 407–427 traverse the membrane as a helical segment; it reads IIVVAVPEGLPLAVTLSLAFA. Residue aspartate 456 is the 4-aspartylphosphate intermediate of the active site. Residues aspartate 758 and aspartate 762 each contribute to the Mg(2+) site. A helical transmembrane segment spans residues 825–845; that stretch reads IVALVINFVSACIIGSAPLTA. Residues 846–847 lie on the Cytoplasmic side of the membrane; that stretch reads VQ. Transmembrane regions (helical) follow at residues 848-868 and 892-912; these read LLWV…TEPP and NIMG…FGGE. The Cytoplasmic portion of the chain corresponds to 913-960; that stretch reads RLLNIKGADSKSIINTLIFNSFVFCQVFNEINSREMQKINVFRGIISN. 2 consecutive transmembrane segments (helical) span residues 961-981 and 995-1015; these read WIFI…IEFL and WLLS…LKCI. Residues 1016 to 1039 lie on the Cytoplasmic side of the membrane; the sequence is PVGSGETSATPNGYRPLANGPDDI.

It belongs to the cation transport ATPase (P-type) (TC 3.A.3) family. Type IIB subfamily.

The protein localises to the membrane. The catalysed reaction is Ca(2+)(in) + ATP + H2O = Ca(2+)(out) + ADP + phosphate + H(+). Activated by calmodulin. Its function is as follows. This magnesium-dependent enzyme catalyzes the hydrolysis of ATP coupled with the translocation of calcium from the cytosol out of the cell, into the endoplasmic reticulum, or into organelles. The sequence is that of Probable calcium-transporting ATPase 9, plasma membrane-type from Oryza sativa subsp. japonica (Rice).